The following is a 151-amino-acid chain: UPF0178 protein YaiI (151 aa).

It belongs to the UPF0178 family.

This chain is UPF0178 protein YaiI, found in Salmonella paratyphi B (strain ATCC BAA-1250 / SPB7).